An 84-amino-acid polypeptide reads, in one-letter code: Inactive transposase YbfQ (84 aa).

The sequence is that of Inactive transposase YbfQ (ybfQ) from Escherichia coli (strain K12).